The following is a 148-amino-acid chain: MGRFIFVSFGLLVVFLSLSGTGAALNCASGWSGYDQHCYKVFDKPKSWADAEKFCKNSTNGSHLASIHSSEEEAFVVKLVSQTLESQILWMGLSKVWNQCDWGWSNGAKLKYKAWAEESYCVYFSSTKKGWRSRACRLLGHFVCKSPA.

The N-terminal stretch at 1–24 (MGRFIFVSFGLLVVFLSLSGTGAA) is a signal peptide. Cystine bridges form between Cys27-Cys38, Cys55-Cys144, and Cys121-Cys136. A C-type lectin domain is found at 34–145 (YDQHCYKVFD…CRLLGHFVCK (112 aa)). 2 N-linked (GlcNAc...) asparagine glycosylation sites follow: Asn57 and Asn60.

The protein belongs to the snaclec family. As to quaternary structure, heterodimer; disulfide-linked. As to expression, expressed by the venom gland.

It is found in the secreted. Its function is as follows. Interferes with one step of hemostasis (modulation of platelet aggregation, or coagulation cascade, for example). In Macrovipera lebetinus (Levantine viper), this protein is Snaclec B9.